The following is a 228-amino-acid chain: Cytidylate kinase (228 aa).

7–15 (GPVATGKST) serves as a coordination point for ATP.

Belongs to the cytidylate kinase family. Type 1 subfamily.

The protein localises to the cytoplasm. The enzyme catalyses CMP + ATP = CDP + ADP. It carries out the reaction dCMP + ATP = dCDP + ADP. The polypeptide is Cytidylate kinase (Protochlamydia amoebophila (strain UWE25)).